A 1984-amino-acid polypeptide reads, in one-letter code: Sodium channel protein type 9 subunit alpha (1984 aa).

Over 1–125 (MAMLPPPGPQ…RRISIKILVH (125 aa)) the chain is Cytoplasmic. Over residues 26–47 (RIAEGKTKEPKEEKKDDHDEGP) the composition is skewed to basic and acidic residues. The interval 26-55 (RIAEGKTKEPKEEKKDDHDEGPKPSSDLEA) is disordered. The I repeat unit spans residues 112 to 408 (FSPLRRISIK…VAMAYEEQNQ (297 aa)). A helical membrane pass occupies residues 126–145 (SLFSMLIMCTILTNCIFMTM). At 146-150 (NNPAE) the chain is on the extracellular side. The chain crosses the membrane as a helical span at residues 151-172 (WTKNVEYTFTGIYTFESLVKIF). Topologically, residues 173 to 185 (ARGFCVGEFTFLR) are cytoplasmic. A helical membrane pass occupies residues 186-204 (DPWNWLDFIVIVFAYLTEF). The Extracellular portion of the chain corresponds to 205-210 (VNLGNV). N-linked (GlcNAc...) asparagine glycosylation occurs at N209. A helical transmembrane segment spans residues 211 to 227 (SALRTFRVLRALKTISV). Residues 228–241 (IPGLKTIVGALIQS) are Cytoplasmic-facing. A helical transmembrane segment spans residues 242 to 267 (VKKLSDVIILTVFCLSVFALIGLQLF). At 268-344 (MGHLKHKCLR…PDYGYTSFDT (77 aa)) the chain is on the extracellular side. C275 and C322 are oxidised to a cystine. A glycan (N-linked (GlcNAc...) asparagine) is linked at N281. An intramembrane region (pore-forming) is located at residues 345–361 (FSWAFLALFRLMTQDYW). Topologically, residues 362–374 (ENLYQQTLRAAGK) are extracellular. The helical transmembrane segment at 375 to 400 (TYMIFFVVVIFLGSFYLINLILAVVA) threads the bilayer. Residues 401–742 (MAYEEQNQAN…FIYIIVMDPF (342 aa)) lie on the Cytoplasmic side of the membrane. Residues 459–469 (SSSETSKLSSK) show a composition bias toward low complexity. Disordered regions lie at residues 459-517 (SSSE…LGVE) and 563-610 (GSET…PPML). Basic residues predominate over residues 472–484 (KERRNRRKKKNQK). 2 stretches are compositionally biased toward basic and acidic residues: residues 487 to 508 (SSGE…ESIS) and 571 to 583 (DEHS…ESRR). An II repeat occupies 723–986 (CSPFWIKFKK…EEDTDANNLQ (264 aa)). The helical transmembrane segment at 743 to 759 (VDLAITICIVLNTLFMA) threads the bilayer. Over 760-768 (MEHHPMTEE) the chain is Extracellular. Residues 769 to 793 (FKNVLVVGNLVFTGIFAAEMVLKLI) form a helical membrane-spanning segment. Residues 794–802 (AMDPYEYFQ) are Cytoplasmic-facing. A helical transmembrane segment spans residues 803–819 (VGWNVFDSLIVTLSLVE). Topologically, residues 820–828 (LFLADVEGL) are extracellular. Residues 829 to 845 (SVLRSFRLLRVFKLAKS) form a helical membrane-spanning segment. Residues 846–862 (WPTLNMLIKIIGNSVGP) lie on the Cytoplasmic side of the membrane. The helical transmembrane segment at 863–885 (LGNLTLVLAIIVFIFAVVGMQLF) threads the bilayer. Over 886-912 (GKSYKECVCKINDDCSLPRWHMNDFFH) the chain is Extracellular. An intrachain disulfide couples C894 to C900. Positions 913–925 (SFLIVFRVLCGEW) form an intramembrane region, pore-forming. The Extracellular segment spans residues 926-937 (IETMWDCMEVAG). C932 and C941 are joined by a disulfide. A helical membrane pass occupies residues 938-964 (QAMCLIVYMMVMVIGNLVVLNLFLALL). The Cytoplasmic segment spans residues 965 to 1184 (LSSFSSDNLS…WWNIRKTCYR (220 aa)). A disordered region spans residues 1087 to 1146 (PIAPGESDLENMNTEELSSDSESEYSKERLNRSSSSECSTVDNALPGEGEEAEAEPVNSD). Residues 1118–1128 (RSSSSECSTVD) show a composition bias toward polar residues. The span at 1134 to 1146 (EGEEAEAEPVNSD) shows a compositional bias: acidic residues. Residues 1177–1485 (NIRKTCYRIV…KKYYNAMKKL (309 aa)) form an III repeat. A helical membrane pass occupies residues 1185 to 1209 (IVEHSWFESFIVLMILLSSGALAFE). The Extracellular segment spans residues 1210-1221 (DIYIEKKKTIKI). Residues 1222 to 1247 (ILEYADKIFTYIFILEMLLKWVAYGY) form a helical membrane-spanning segment. The Cytoplasmic segment spans residues 1248–1249 (KT). A helical transmembrane segment spans residues 1250 to 1275 (YFTNAWCWLDFLIVDVSLVTLVANTL). Topologically, residues 1276 to 1284 (GYSDLGPIK) are extracellular. The helical transmembrane segment at 1285 to 1301 (SLRTLRALRPLRALSRF) threads the bilayer. Over 1302–1314 (EGMRVVVNALIGA) the chain is Cytoplasmic. A helical membrane pass occupies residues 1315–1339 (IPSIMNVLLVCLIFWLIFSIMGVNL). Residues 1340 to 1391 (FAGKFYQCVNTTDDSRFPTKQVSNRSECFALMNGSQNVRWKNLKVNFDNVGL) are Extracellular-facing. C1347 and C1367 are oxidised to a cystine. N-linked (GlcNAc...) asparagine glycans are attached at residues N1349, N1363, and N1372. Positions 1392–1402 (RYLSLLQVATF) form an intramembrane region, pore-forming. At 1403 to 1428 (KGWMDIMYAAVDSVNVDQQPSYEHNL) the chain is on the extracellular side. Residues 1429–1454 (YMYIYFVIFIIFGSFFTLNLFIGVII) form a helical membrane-spanning segment. The Cytoplasmic segment spans residues 1455 to 1511 (DNFNQQKKKLGGQDIFMTEEQKKYYNAMKKLGSKKPQKPIPRPGNKFQGCIFDLVTN). S1487 carries the phosphoserine; by PKC modification. Residues 1494 to 1792 (IPRPGNKFQG…WEKFDPDATQ (299 aa)) form an IV repeat. Residues 1512–1531 (QAFDITIMILICLNMVTMMV) form a helical membrane-spanning segment. The Extracellular segment spans residues 1532 to 1542 (EKEGQSDYMTD). A helical transmembrane segment spans residues 1543–1564 (VLYWINVVFIILFTGECVLKLI). The Cytoplasmic segment spans residues 1565–1573 (SLRHYYFTI). A helical transmembrane segment spans residues 1574–1595 (GWNIFDFVVVILSIVGMFLAEL). The Extracellular segment spans residues 1596–1604 (IETYFVSPT). The chain crosses the membrane as a helical span at residues 1605 to 1624 (LFRVIRLARIGRILRLIKGA). The Cytoplasmic segment spans residues 1625–1637 (KGIRTLLFALMMS). The chain crosses the membrane as a helical span at residues 1638–1660 (LPALFNIGLLLFLVMFIYAIFGM). Residues 1661–1683 (SNFAYVKKEAGINDMFNFETFGN) lie on the Extracellular side of the membrane. Residues 1684–1696 (SMICLFQITTSAG) constitute an intramembrane region (pore-forming). Residues 1697 to 1730 (WDGLLAPILNSAPPDCDPKKVHPGSSTEGDCGSP) lie on the Extracellular side of the membrane. A disulfide bridge connects residues C1712 and C1727. Residues 1731-1756 (SVGIFYFVSYIIISFLVVVNMYIAVI) form a helical membrane-spanning segment. The Cytoplasmic segment spans residues 1757-1984 (LENFSVATEE…KGKDGKETKK (228 aa)). Residues 1886 to 1915 (EDVSATVIQRAYRRYRLRQNVKNISSIYIK) enclose the IQ domain. The disordered stretch occupies residues 1924 to 1984 (PNKGDIVFDN…KGKDGKETKK (61 aa)). Positions 1933-1956 (NVNSSSPEKTDATASTISPPSYDS) are enriched in polar residues. Positions 1958–1984 (TKPDKEKYEKDKTEKEDKGKDGKETKK) are enriched in basic and acidic residues.

It belongs to the sodium channel (TC 1.A.1.10) family. Nav1.7/SCN9A subfamily. The Nav1.7 voltage-gated sodium channel consists of an ion-conducting alpha subunit SCN9A which is functional on its own regulated by one or more beta-1 (SCN1B), beta-2 (SCN2B), beta-3 (SCN3B) and beta-4 (SCN4B) subunits. SCN1B and SCN3B are non-covalently associated with SCN9A. SCN2B and SCN4B are disulfide-linked to SCN9A. SCN1B regulates channel inactivation. Interacts with NEDD4 and NEDD4L; regulates Nav1.7 activity most probably through ubiquitination and subsequent endocytosis. Interacts with TMEM233; modulates the gating properties of NaV1.7. In terms of processing, phosphorylation at Ser-1487 by PKC in a highly conserved cytoplasmic loop increases peak sodium currents. Post-translationally, ubiquitinated by NEDD4L; which may promote its endocytosis. Expressed in the sciatic nerve, spinal cord, brainstem, cerebellum and cortex, but not expressed in the lung, skeletal and cardiac muscles, kidney and liver.

It localises to the cell membrane. The protein resides in the cell projection. The protein localises to the neuron projection. It is found in the axon. It carries out the reaction Na(+)(in) = Na(+)(out). Its function is as follows. Pore-forming subunit of Nav1.7, a voltage-gated sodium (Nav) channel that directly mediates the depolarizing phase of action potentials in excitable membranes. Navs, also called VGSCs (voltage-gated sodium channels) or VDSCs (voltage-dependent sodium channels), operate by switching between closed and open conformations depending on the voltage difference across the membrane. In the open conformation they allow Na(+) ions to selectively pass through the pore, along their electrochemical gradient. The influx of Na(+) ions provokes membrane depolarization, initiating the propagation of electrical signals throughout cells and tissues. Nav1.7 plays a crucial role in controlling the excitability and action potential propagation from nociceptor neurons, thereby contributing to the sensory perception of pain. The protein is Sodium channel protein type 9 subunit alpha of Oryctolagus cuniculus (Rabbit).